The sequence spans 151 residues: Metalloproteinase inhibitor 3 (151 aa).

The NTR domain maps to 1–108 (CNSDIVIRAK…GLNYRYHLGC (108 aa)). 3 disulfide bridges follow: Cys-1–Cys-108, Cys-115–Cys-120, and Cys-128–Cys-149. The involved in metalloproteinase-binding stretch occupies residues 53–54 (ES). Residues 71 to 151 (GRVYDGKVYT…YQSKHYACIR (81 aa)) are mediates interaction with EFEMP1.

Belongs to the protease inhibitor I35 (TIMP) family. In terms of assembly, interacts with EFEMP1.

It localises to the secreted. It is found in the extracellular space. The protein resides in the extracellular matrix. Functionally, complexes with metalloproteinases (such as collagenases) and irreversibly inactivates them by binding to their catalytic zinc cofactor. May form part of a tissue-specific acute response to remodeling stimuli. The chain is Metalloproteinase inhibitor 3 (TIMP3) from Oryctolagus cuniculus (Rabbit).